We begin with the raw amino-acid sequence, 284 residues long: D-tagatose-1,6-bisphosphate aldolase subunit GatY (284 aa).

The active-site Proton donor is the Asp82. 2 residues coordinate Zn(2+): His83 and His180. Cys181 provides a ligand contact to dihydroxyacetone phosphate. His208 contacts Zn(2+). Dihydroxyacetone phosphate contacts are provided by residues 209–211 (GAS) and 230–233 (NVAT).

The protein belongs to the class II fructose-bisphosphate aldolase family. TagBP aldolase GatY subfamily. As to quaternary structure, forms a complex with GatZ. Zn(2+) is required as a cofactor.

It carries out the reaction D-tagatofuranose 1,6-bisphosphate = D-glyceraldehyde 3-phosphate + dihydroxyacetone phosphate. It participates in carbohydrate metabolism; D-tagatose 6-phosphate degradation; D-glyceraldehyde 3-phosphate and glycerone phosphate from D-tagatose 6-phosphate: step 2/2. Functionally, catalytic subunit of the tagatose-1,6-bisphosphate aldolase GatYZ, which catalyzes the reversible aldol condensation of dihydroxyacetone phosphate (DHAP or glycerone-phosphate) with glyceraldehyde 3-phosphate (G3P) to produce tagatose 1,6-bisphosphate (TBP). Requires GatZ subunit for full activity and stability. Is involved in the catabolism of galactitol. This is D-tagatose-1,6-bisphosphate aldolase subunit GatY from Salmonella paratyphi A (strain ATCC 9150 / SARB42).